Here is a 367-residue protein sequence, read N- to C-terminus: Calcium uniporter protein, mitochondrial (367 aa).

The transit peptide at 1-12 (MAMPRVLCRVRL) directs the protein to the mitochondrion. Residues 13 to 232 (LIHNDFSVIS…LEEKKLELEQ (220 aa)) lie on the Mitochondrial matrix side of the membrane. Residues 61–80 (KQDASSSSSDSDSSDSDEDD) form a disordered region. Residues 199–233 (REHQLQKEVELTTQLETLQQELLPLEEKKLELEQV) adopt a coiled-coil conformation. Residues 233–253 (VANRRSNWMAWAGLGLMSVQF) form a helical membrane-spanning segment. The Mitochondrial intermembrane portion of the chain corresponds to 254-262 (GILARLTWW). Residues 263–284 (EYSWDIMEPVTYFVTYGTAMAA) form a helical membrane-spanning segment. A Selectivity filter motif is present at residues 266–276 (WDIMEPVTYFV). Residue Glu-270 participates in Ca(2+) binding. The Mitochondrial matrix portion of the chain corresponds to 285–367 (YAYFVLTREE…KKQVEEKAKE (83 aa)).

This sequence belongs to the MCU (TC 1.A.77) family. Homotetramer. Component of the uniplex complex, composed of MCU, EMRE, MICU1 and MICU2 in a 4:4:1:1 stoichiometry.

Its subcellular location is the mitochondrion inner membrane. It carries out the reaction Ca(2+)(in) = Ca(2+)(out). MCU channel activity is regulated by the heterodimer composed of MICU1 and MICU2, which act as calcium-sensors. At low calcium levels, MICU1 occludes the pore of the MCU channel, preventing mitochondrial calcium uptake. At higher calcium levels, calcium-binding to MICU1 and MICU2 induces a conformational change that weakens MCU-MICU1 interactions and moves the MICU1-MICU2 heterodimer away from the pore, allowing calcium permeation through the channel. Its function is as follows. Channel-forming and calcium-conducting subunit of the mitochondrial inner membrane calcium uniporter complex (uniplex), which mediates calcium uptake into the mitochondrial matrix. MCU channel activity is regulated by the calcium-sensor subunits of the uniplex MICU1 and MICU2. Mitochondrial calcium homeostasis plays key roles in cellular physiology and regulates ATP production, cytoplasmic calcium signals and activation of cell death pathways. The protein is Calcium uniporter protein, mitochondrial of Tribolium castaneum (Red flour beetle).